We begin with the raw amino-acid sequence, 526 residues long: Lysine--tRNA ligase (526 aa).

Mg(2+) is bound by residues Glu-431 and Glu-438.

Belongs to the class-II aminoacyl-tRNA synthetase family. Homodimer. Mg(2+) is required as a cofactor.

Its subcellular location is the cytoplasm. It catalyses the reaction tRNA(Lys) + L-lysine + ATP = L-lysyl-tRNA(Lys) + AMP + diphosphate. In Chlamydia trachomatis serovar D (strain ATCC VR-885 / DSM 19411 / UW-3/Cx), this protein is Lysine--tRNA ligase (lysS).